The following is a 283-amino-acid chain: Thymidylate synthase (283 aa).

Residue Arg22 coordinates dUMP. Catalysis depends on Cys160, which acts as the Nucleophile. Residues 180–183, Asn191, and 221–223 contribute to the dUMP site; these read RSCD and HIY. Asp183 serves as a coordination point for (6R)-5,10-methylene-5,6,7,8-tetrahydrofolate. Ser282 provides a ligand contact to (6R)-5,10-methylene-5,6,7,8-tetrahydrofolate.

The protein belongs to the thymidylate synthase family. Bacterial-type ThyA subfamily. Homodimer.

The protein resides in the cytoplasm. The enzyme catalyses dUMP + (6R)-5,10-methylene-5,6,7,8-tetrahydrofolate = 7,8-dihydrofolate + dTMP. It participates in pyrimidine metabolism; dTTP biosynthesis. Its function is as follows. Catalyzes the reductive methylation of 2'-deoxyuridine-5'-monophosphate (dUMP) to 2'-deoxythymidine-5'-monophosphate (dTMP) while utilizing 5,10-methylenetetrahydrofolate (mTHF) as the methyl donor and reductant in the reaction, yielding dihydrofolate (DHF) as a by-product. This enzymatic reaction provides an intracellular de novo source of dTMP, an essential precursor for DNA biosynthesis. This Tolumonas auensis (strain DSM 9187 / NBRC 110442 / TA 4) protein is Thymidylate synthase.